We begin with the raw amino-acid sequence, 442 residues long: Limonoid 1-O-acetyltransferse (442 aa).

Catalysis depends on proton acceptor residues H155 and D381.

Belongs to the plant acyltransferase family. As to quaternary structure, monomer.

The catalysed reaction is (1S)-1-hydroxy-luvungin A + acetyl-CoA = (1S)-1-acetoxy-luvungin A + CoA. Its pathway is secondary metabolite biosynthesis; terpenoid biosynthesis. Functionally, acetyltransferase involved in the biosynthesis of limonoids triterpene natural products such as limonin, a compound with insecticidal activity responsible for the bitter taste in citrus. Catalyzes the formation of (1S)-1-acetoxy-luvungin A from (1S)-1-hydroxy-luvungin A. This chain is Limonoid 1-O-acetyltransferse, found in Citrus sinensis (Sweet orange).